Reading from the N-terminus, the 829-residue chain is Periplasmic nitrate reductase (829 aa).

A signal peptide (tat-type signal) is located at residues 1 to 30; sequence MKLSRRDFMKANAVAAAAAVAGVSAPTLAA. The 4Fe-4S Mo/W bis-MGD-type domain occupies 41-97; the sequence is IKWDKAPCRFCGTGCSVLVGSQDGRVVATQGDPDAPVNRGLNCIKGYFLSKIMYGED. The [4Fe-4S] cluster site is built by Cys-48, Cys-51, Cys-55, and Cys-83. Mo-bis(molybdopterin guanine dinucleotide) contacts are provided by residues Lys-85, Gln-152, Asn-177, Cys-181, 214 to 221, 245 to 249, 264 to 266, Met-374, Gln-378, Asn-484, 510 to 511, Lys-533, Asp-560, and 719 to 728; these read WGSNMAEM, STFEH, QTD, SD, and TGRVLEHWHT. Phe-795 is a substrate binding site. 2 residues coordinate Mo-bis(molybdopterin guanine dinucleotide): Asn-803 and Lys-820.

The protein belongs to the prokaryotic molybdopterin-containing oxidoreductase family. NasA/NapA/NarB subfamily. In terms of assembly, component of the periplasmic nitrate reductase NapAB complex composed of NapA and NapB. [4Fe-4S] cluster is required as a cofactor. It depends on Mo-bis(molybdopterin guanine dinucleotide) as a cofactor. Predicted to be exported by the Tat system. The position of the signal peptide cleavage has not been experimentally proven.

It is found in the periplasm. It carries out the reaction 2 Fe(II)-[cytochrome] + nitrate + 2 H(+) = 2 Fe(III)-[cytochrome] + nitrite + H2O. In terms of biological role, catalytic subunit of the periplasmic nitrate reductase complex NapAB. Receives electrons from NapB and catalyzes the reduction of nitrate to nitrite. This Aeromonas salmonicida (strain A449) protein is Periplasmic nitrate reductase.